The primary structure comprises 1269 residues: Multifunctional 2-oxoglutarate metabolism enzyme (1269 aa).

Positions Met1–Asn41 are 2-oxoglutarate dehydrogenase E1, N-terminal part. Basic and acidic residues predominate over residues Arg23–Leu37. The segment at Arg23 to Asn145 is disordered. Residues Pro42–Ala107 form a linker region. Residues Glu43–Arg58 are compositionally biased toward polar residues. Residues Lys63–Lys75 show a composition bias toward pro residues. The interval Glu108–Ser378 is succinyltransferase E2. His357 functions as the Proton acceptor; for succinyltransferase activity in the catalytic mechanism. The interval Asp379 to Pro1269 is 2-oxoglutarate dehydrogenase E1, C-terminal part. Residue Arg583 participates in thiamine diphosphate binding. 2-oxoglutarate is bound by residues His622 and Ser647. Thiamine diphosphate is bound by residues Ser647, Leu649, Asp686, Ala687, Ala688, and Asn719. Residue Asp686 coordinates Mg(2+). 2 residues coordinate Mg(2+): Asn719 and Ile721. The stretch at Asp824–Glu855 forms a coiled coil. His1061 is a 2-oxoglutarate binding site. 7 residues coordinate acetyl-CoA: Thr1079, Arg1095, Lys1130, Ser1133, Gln1183, Arg1190, and Arg1191.

The protein belongs to the 2-oxoacid dehydrogenase family. Kgd subfamily. As to quaternary structure, homodimer. The 2-oxoglutarate dehydrogenase (ODH) complex contains multiple copies of three enzymatic components: 2-oxoglutarate dehydrogenase (E1), dihydrolipoamide succinyltransferase (E2) and lipoamide dehydrogenase (E3). Mg(2+) is required as a cofactor. Thiamine diphosphate serves as cofactor.

The catalysed reaction is glyoxylate + 2-oxoglutarate + H(+) = 2-hydroxy-3-oxoadipate + CO2. It carries out the reaction 2-oxoglutarate + H(+) = succinate semialdehyde + CO2. It catalyses the reaction N(6)-[(R)-lipoyl]-L-lysyl-[protein] + 2-oxoglutarate + H(+) = N(6)-[(R)-S(8)-succinyldihydrolipoyl]-L-lysyl-[protein] + CO2. The enzyme catalyses N(6)-[(R)-dihydrolipoyl]-L-lysyl-[protein] + succinyl-CoA = N(6)-[(R)-S(8)-succinyldihydrolipoyl]-L-lysyl-[protein] + CoA. Its pathway is carbohydrate metabolism; tricarboxylic acid cycle; succinate from 2-oxoglutarate (transferase route): step 1/2. It participates in carbohydrate metabolism; tricarboxylic acid cycle; succinyl-CoA from 2-oxoglutarate (dehydrogenase route): step 1/1. Alpha-ketoglutarate dehydrogenase and decarboxylase activities are inhibited by unphosphorylated GarA, and allosterically activated by acetyl-CoA, the main substrate of the TCA cycle. Its function is as follows. Shows three enzymatic activities that share a first common step, the attack of thiamine-PP on 2-oxoglutarate (alpha-ketoglutarate, KG), leading to the formation of an enamine-thiamine-PP intermediate upon decarboxylation. Thus, displays KGD activity, catalyzing the decarboxylation from five-carbon 2-oxoglutarate to four-carbon succinate semialdehyde (SSA). Also catalyzes C-C bond formation between the activated aldehyde formed after decarboxylation of alpha-ketoglutarate and the carbonyl of glyoxylate (GLX), to yield 2-hydroxy-3-oxoadipate (HOA), which spontaneously decarboxylates to form 5-hydroxylevulinate (HLA). And is also a component of the 2-oxoglutarate dehydrogenase (ODH) complex, that catalyzes the overall conversion of 2-oxoglutarate to succinyl-CoA and CO(2). The KG decarboxylase and KG dehydrogenase reactions provide two alternative, tightly regulated, pathways connecting the oxidative and reductive branches of the TCA cycle. The polypeptide is Multifunctional 2-oxoglutarate metabolism enzyme (kgd) (Mycobacterium sp. (strain KMS)).